Reading from the N-terminus, the 335-residue chain is tRNA N6-adenosine threonylcarbamoyltransferase (335 aa).

The Fe cation site is built by histidine 111 and histidine 115. Residues leucine 133–glycine 137, aspartate 166, glycine 179, and asparagine 276 contribute to the substrate site. Residue aspartate 301 coordinates Fe cation.

Belongs to the KAE1 / TsaD family. The cofactor is Fe(2+).

Its subcellular location is the cytoplasm. It catalyses the reaction L-threonylcarbamoyladenylate + adenosine(37) in tRNA = N(6)-L-threonylcarbamoyladenosine(37) in tRNA + AMP + H(+). Functionally, required for the formation of a threonylcarbamoyl group on adenosine at position 37 (t(6)A37) in tRNAs that read codons beginning with adenine. Is involved in the transfer of the threonylcarbamoyl moiety of threonylcarbamoyl-AMP (TC-AMP) to the N6 group of A37, together with TsaE and TsaB. TsaD likely plays a direct catalytic role in this reaction. The protein is tRNA N6-adenosine threonylcarbamoyltransferase of Wolbachia sp. subsp. Brugia malayi (strain TRS).